Consider the following 112-residue polypeptide: Small ribosomal subunit protein bS6 (112 aa).

Belongs to the bacterial ribosomal protein bS6 family.

In terms of biological role, binds together with bS18 to 16S ribosomal RNA. The sequence is that of Small ribosomal subunit protein bS6 (rpsF) from Chlamydia muridarum (strain MoPn / Nigg).